We begin with the raw amino-acid sequence, 616 residues long: Dihydroxy-acid dehydratase (616 aa).

A Mg(2+)-binding site is contributed by Asp-81. Cys-122 is a [2Fe-2S] cluster binding site. Mg(2+) contacts are provided by Asp-123 and Lys-124. The residue at position 124 (Lys-124) is an N6-carboxylysine. Residue Cys-196 coordinates [2Fe-2S] cluster. Glu-496 is a Mg(2+) binding site. Catalysis depends on Ser-522, which acts as the Proton acceptor.

The protein belongs to the IlvD/Edd family. Homodimer. [2Fe-2S] cluster is required as a cofactor. Mg(2+) serves as cofactor.

The enzyme catalyses (2R)-2,3-dihydroxy-3-methylbutanoate = 3-methyl-2-oxobutanoate + H2O. It catalyses the reaction (2R,3R)-2,3-dihydroxy-3-methylpentanoate = (S)-3-methyl-2-oxopentanoate + H2O. It functions in the pathway amino-acid biosynthesis; L-isoleucine biosynthesis; L-isoleucine from 2-oxobutanoate: step 3/4. The protein operates within amino-acid biosynthesis; L-valine biosynthesis; L-valine from pyruvate: step 3/4. Functionally, functions in the biosynthesis of branched-chain amino acids. Catalyzes the dehydration of (2R,3R)-2,3-dihydroxy-3-methylpentanoate (2,3-dihydroxy-3-methylvalerate) into 2-oxo-3-methylpentanoate (2-oxo-3-methylvalerate) and of (2R)-2,3-dihydroxy-3-methylbutanoate (2,3-dihydroxyisovalerate) into 2-oxo-3-methylbutanoate (2-oxoisovalerate), the penultimate precursor to L-isoleucine and L-valine, respectively. The polypeptide is Dihydroxy-acid dehydratase (Streptomyces griseus subsp. griseus (strain JCM 4626 / CBS 651.72 / NBRC 13350 / KCC S-0626 / ISP 5235)).